The chain runs to 109 residues: MKLKKKFLEKSKNIANERIDILMNFAQKELRCEKKERSKNYVLLSKKIAMRMRMPFPKEWRRRICKNCGSFLIYGKNSSVRIKSKNYSHVVITCLECKHIFRIPIKKSK.

Zn(2+) contacts are provided by cysteine 65, cysteine 68, cysteine 94, and cysteine 97.

The protein belongs to the eukaryotic/archaeal RNase P protein component 4 family. As to quaternary structure, consists of a catalytic RNA component and at least 4-5 protein subunits. Requires Zn(2+) as cofactor.

It localises to the cytoplasm. The catalysed reaction is Endonucleolytic cleavage of RNA, removing 5'-extranucleotides from tRNA precursor.. In terms of biological role, part of ribonuclease P, a protein complex that generates mature tRNA molecules by cleaving their 5'-ends. The chain is Ribonuclease P protein component 4 from Methanococcus vannielii (strain ATCC 35089 / DSM 1224 / JCM 13029 / OCM 148 / SB).